Reading from the N-terminus, the 508-residue chain is Probable metalloreductase AIM14 (508 aa).

8 consecutive transmembrane segments (helical) span residues 18 to 38, 70 to 90, 100 to 120, 137 to 157, 168 to 188, 198 to 218, 222 to 242, and 347 to 367; these read LPYGYYVLGVIVFYTIFLIVM, PLLLLLVFVPFIHKYSLVAYI, LSYVLVILNVLLTLRPANPIL, FVTVIGIIHGIGFIVKWSLDP, LFNFIGVIAFVPLFILMFASV, SFYVIHQLGQWAMVFLVPIHA, VTVPYFFILLALYIWRGISYI, and VAIVVGGSGISFGLSIFKYLQ. Residues 97–214 form the Ferric oxidoreductase domain; that stretch reads LGRLSYVLVI…LGQWAMVFLV (118 aa). The region spanning 241-361 is the FAD-binding FR-type domain; that stretch reads YIYYSTTVNV…GGSGISFGLS (121 aa).

The protein belongs to the ferric reductase (FRE) family. AIM14 subfamily.

It localises to the membrane. Its function is as follows. Probable cell surface metalloreductase. May be involved in iron or copper homeostasis. In Kluyveromyces lactis (strain ATCC 8585 / CBS 2359 / DSM 70799 / NBRC 1267 / NRRL Y-1140 / WM37) (Yeast), this protein is Probable metalloreductase AIM14 (AIM14).